A 359-amino-acid polypeptide reads, in one-letter code: Fructose-bisphosphate aldolase (359 aa).

Ser-50 provides a ligand contact to D-glyceraldehyde 3-phosphate. Asp-83 acts as the Proton donor in catalysis. Zn(2+) contacts are provided by His-84, Asp-105, Glu-142, and His-198. Residue Gly-199 participates in dihydroxyacetone phosphate binding. His-232 serves as a coordination point for Zn(2+). Residues Gly-233–Ser-235 and Asn-275–Thr-278 contribute to the dihydroxyacetone phosphate site.

The protein belongs to the class II fructose-bisphosphate aldolase family. Zn(2+) is required as a cofactor.

It carries out the reaction beta-D-fructose 1,6-bisphosphate = D-glyceraldehyde 3-phosphate + dihydroxyacetone phosphate. The protein operates within carbohydrate degradation; glycolysis; D-glyceraldehyde 3-phosphate and glycerone phosphate from D-glucose: step 4/4. In terms of biological role, catalyzes the aldol condensation of dihydroxyacetone phosphate (DHAP or glycerone-phosphate) with glyceraldehyde 3-phosphate (G3P) to form fructose 1,6-bisphosphate (FBP) in gluconeogenesis and the reverse reaction in glycolysis. This is Fructose-bisphosphate aldolase (fba) from Nostoc commune.